We begin with the raw amino-acid sequence, 248 residues long: N-acylneuraminate-9-phosphatase (248 aa).

Asp12 contacts Mg(2+). Phosphate contacts are provided by Leu13, Asp14, Thr131, Asn132, and Lys164. Asp14 is a Mg(2+) binding site. Mg(2+) is bound at residue Asp189.

This sequence belongs to the HAD-like hydrolase superfamily. NANP family. Mg(2+) is required as a cofactor.

It carries out the reaction N-acetylneuraminate 9-phosphate + H2O = N-acetylneuraminate + phosphate. The enzyme catalyses N-glycoloylneuraminate 9-phosphate + H2O = N-glycoloylneuraminate + phosphate. It functions in the pathway amino-sugar metabolism; N-acetylneuraminate biosynthesis. With respect to regulation, inhibited by calcium. Inhibited by vanadate, sodium orthovanate and phosphonate. Catalyzes the dephosphorylation of N-acylneuraminate 9-phosphate (Neu5Ac-9-P) to sialic acid N-acetylneuraminic acid (Neu5Ac). May also use N-glycoloylneuraminate 9-phosphate as substrate. The chain is N-acylneuraminate-9-phosphatase from Mus musculus (Mouse).